Here is a 321-residue protein sequence, read N- to C-terminus: Anthranilate phosphoribosyltransferase (321 aa).

5-phospho-alpha-D-ribose 1-diphosphate-binding positions include Gly-72, 75 to 76, Thr-80, 82 to 85, 99 to 107, and Ser-111; these read GD, NVST, and KHGNVSITS. Gly-72 contributes to the anthranilate binding site. Ser-84 serves as a coordination point for Mg(2+). Asn-102 provides a ligand contact to anthranilate. Arg-157 contributes to the anthranilate binding site. Positions 216 and 217 each coordinate Mg(2+).

Belongs to the anthranilate phosphoribosyltransferase family. In terms of assembly, homodimer. Requires Mg(2+) as cofactor.

It carries out the reaction N-(5-phospho-beta-D-ribosyl)anthranilate + diphosphate = 5-phospho-alpha-D-ribose 1-diphosphate + anthranilate. Its pathway is amino-acid biosynthesis; L-tryptophan biosynthesis; L-tryptophan from chorismate: step 2/5. Catalyzes the transfer of the phosphoribosyl group of 5-phosphorylribose-1-pyrophosphate (PRPP) to anthranilate to yield N-(5'-phosphoribosyl)-anthranilate (PRA). This Methanococcus maripaludis (strain C6 / ATCC BAA-1332) protein is Anthranilate phosphoribosyltransferase.